Consider the following 109-residue polypeptide: Large ribosomal subunit protein uL22 (109 aa).

It belongs to the universal ribosomal protein uL22 family. In terms of assembly, part of the 50S ribosomal subunit.

This protein binds specifically to 23S rRNA; its binding is stimulated by other ribosomal proteins, e.g. L4, L17, and L20. It is important during the early stages of 50S assembly. It makes multiple contacts with different domains of the 23S rRNA in the assembled 50S subunit and ribosome. Functionally, the globular domain of the protein is located near the polypeptide exit tunnel on the outside of the subunit, while an extended beta-hairpin is found that lines the wall of the exit tunnel in the center of the 70S ribosome. The polypeptide is Large ribosomal subunit protein uL22 (Paraburkholderia phymatum (strain DSM 17167 / CIP 108236 / LMG 21445 / STM815) (Burkholderia phymatum)).